The following is a 951-amino-acid chain: Zinc fingers and homeoboxes protein 3 (951 aa).

Residues 1–66 (MASKRKSTTP…SSTDGSALAN (66 aa)) are disordered. The tract at residues 1 to 107 (MASKRKSTTP…SEHTDFNKDP (107 aa)) is required for nuclear localization. Low complexity predominate over residues 42 to 58 (PSEAPDASSEAAPNPSS). 2 consecutive C2H2-type zinc fingers follow at residues 77–100 (YCCK…NSEH) and 109–132 (FVCT…AKCH). Residues 227-252 (TFINGAAPGSQASAKSTKPPPAANGP) form a disordered region. Positions 238–483 (ASAKSTKPPP…LLTACPSITS (246 aa)) are required for homodimerization and interaction with NFYA. The required for repressor activity stretch occupies residues 299–497 (LSSIPTYNAA…DANIYKNKKS (199 aa)). DNA-binding regions (homeobox) lie at residues 300-359 (SSIP…GISW) and 489-548 (ANIY…RNLK). Positions 492 to 550 (YKNKKSHEQLSALKGSFCRNQFPGQSEVEHLTKVTGLSTREVRKWFSDRRYHCRNLKGS) are required for nuclear localization. Ser-599 carries the phosphoserine modification. A DNA-binding region (homeobox 3) is located at residues 607-666 (TPTKYKERAPEQLRVLENSFAQNPLPPEEELDRLRSETKMTRREIDGWFSERRKKVNTEE). Residues 662–676 (VNTEETKKADGHMPK) show a composition bias toward basic and acidic residues. Residues 662–690 (VNTEETKKADGHMPKEEEEGAEQEGRDEE) are disordered. Acidic residues predominate over residues 677–690 (EEEEGAEQEGRDEE). A phosphoserine mark is found at Ser-703 and Ser-718. 2 DNA-binding regions (homeobox) span residues 759–818 (PSKV…KNGQ) and 830–889 (FPPG…TRAV). Residues 916 to 951 (SELSENSESWEPSAPEASSEPFDTSSPQSGRQLEAD) are disordered. A compositionally biased stretch (low complexity) spans 919–936 (SENSESWEPSAPEASSEP). A phosphoserine mark is found at Ser-922 and Ser-941. The span at 937-951 (FDTSSPQSGRQLEAD) shows a compositional bias: polar residues.

Belongs to the ZHX family. Homodimer (via homeobox domain 1). Heterodimer with ZHX1 (via homeobox domain 1). Heterodimer with ZHX2 (via homeobox domain 1). Heterodimerization with ZHX1 is a prerequisite for repressor activity. Interacts with NFYA. In terms of tissue distribution, ubiquitously expressed.

It localises to the nucleus. Functionally, acts as a transcriptional repressor. Involved in the early stages of mesenchymal stem cell (MSC) osteogenic differentiation. Is a regulator of podocyte gene expression during primary glomerula disease. Binds to promoter DNA. In Mus musculus (Mouse), this protein is Zinc fingers and homeoboxes protein 3 (Zhx3).